We begin with the raw amino-acid sequence, 1819 residues long: U3 small nucleolar RNA-associated protein 10 (1819 aa).

One copy of the HEAT 1 repeat lies at 583–620; that stretch reads LDFQAILPFLLVALADPSERIRREAAAALAAIGGIYKK. 2 consecutive transmembrane segments (helical) span residues 945–965 and 1001–1021; these read IQSG…AIVN and ALLL…HSVM. HEAT repeat units lie at residues 1045–1082, 1269–1306, 1313–1351, and 1775–1812; these read QTID…AFEH, LTLV…QNPE, IRVL…KYGK, and ALLP…VLGE.

This sequence belongs to the HEATR1/UTP10 family. Component of the ribosomal small subunit (SSU) processome.

It is found in the nucleus. The protein localises to the nucleolus. Its subcellular location is the membrane. Functionally, involved in nucleolar processing of pre-18S ribosomal RNA. Involved in ribosome biosynthesis. The chain is U3 small nucleolar RNA-associated protein 10 from Aspergillus clavatus (strain ATCC 1007 / CBS 513.65 / DSM 816 / NCTC 3887 / NRRL 1 / QM 1276 / 107).